The primary structure comprises 312 residues: Homoserine O-acetyltransferase (312 aa).

The Acyl-thioester intermediate role is filled by C142. Residues K163 and S192 each contribute to the substrate site. The active-site Proton acceptor is the H235. E237 is a catalytic residue. A substrate-binding site is contributed by R249.

This sequence belongs to the MetA family.

The protein resides in the cytoplasm. The enzyme catalyses L-homoserine + acetyl-CoA = O-acetyl-L-homoserine + CoA. Its pathway is amino-acid biosynthesis; L-methionine biosynthesis via de novo pathway; O-acetyl-L-homoserine from L-homoserine: step 1/1. In terms of biological role, transfers an acetyl group from acetyl-CoA to L-homoserine, forming acetyl-L-homoserine. The protein is Homoserine O-acetyltransferase of Chelativorans sp. (strain BNC1).